A 294-amino-acid polypeptide reads, in one-letter code: N-acetylmuramic acid 6-phosphate etherase (294 aa).

The SIS domain occupies 54 to 217 (VIKSFEEEGR…STASMIGVGK (164 aa)). The active-site Proton donor is the glutamate 82. Glutamate 113 is a catalytic residue.

Belongs to the GCKR-like family. MurNAc-6-P etherase subfamily. As to quaternary structure, homodimer.

It carries out the reaction N-acetyl-D-muramate 6-phosphate + H2O = N-acetyl-D-glucosamine 6-phosphate + (R)-lactate. Its pathway is amino-sugar metabolism; N-acetylmuramate degradation. In terms of biological role, specifically catalyzes the cleavage of the D-lactyl ether substituent of MurNAc 6-phosphate, producing GlcNAc 6-phosphate and D-lactate. In Bacillus cereus (strain ATCC 10987 / NRS 248), this protein is N-acetylmuramic acid 6-phosphate etherase.